The chain runs to 366 residues: MKAIIVKPPNAGVQVKDVDEKKLDSYGKIKIRTIYNGICGTDREIVNGKLTLSTLPKGKDFLVLGHEAIGVVEESYHGFSQGDLVMPVNRRGCGICRNCLVGRPDFCETGEFGEAGIHKMDGFMREWWYDDPKYLVKIPKSIEDIGILAQPLADIEKSIEEILEVQKRVPVWTCDDGTLNCRKVLVVGTGPIGVLFTLLFRTYGLEVWMANRREPTEVEQTVIEETKTNYYNSSNGYDKLKDSVGKFDVIIDATGADVNILGNVIPLLGRNGVLGLFGFSTSGSVPLDYKTLQEIVHTNKTIIGLVNGQKPHFQQAVVHLASWKTLYPKAAKMLITKTVSINDEKELLKVLREKEHGEIKIRILWE.

Position 39 (C39) interacts with Zn(2+). Substrate is bound at residue T41. Residues H66 and E67 each coordinate Zn(2+). N89 is a substrate binding site. Positions 93, 96, 99, and 107 each coordinate Zn(2+). Substrate-binding residues include E114, Q150, and D154. Residue Q150 participates in Zn(2+) binding. Residues 189–192 (TGPI), 211–213 (NRR), 277–279 (FGF), 305–307 (LVN), and K354 contribute to the NADP(+) site. Position 307 (N307) interacts with substrate.

Belongs to the zinc-containing alcohol dehydrogenase family. Glucose 1-dehydrogenase subfamily. As to quaternary structure, homotetramer. Zn(2+) is required as a cofactor.

It catalyses the reaction D-glucose + NAD(+) = D-glucono-1,5-lactone + NADH + H(+). It carries out the reaction D-glucose + NADP(+) = D-glucono-1,5-lactone + NADPH + H(+). The enzyme catalyses D-galactose + NAD(+) = D-galactono-1,4-lactone + NADH + H(+). The catalysed reaction is D-galactose + NADP(+) = D-galactono-1,5-lactone + NADPH + H(+). It catalyses the reaction an aldopyranose + NAD(+) = aldono-1,5-lactone + NADH + H(+). It carries out the reaction an aldopyranose + NADP(+) = aldono-1,5-lactone + NADPH + H(+). Inhibited by EDTA in vitro. Functionally, catalyzes the NAD(P)(+)-dependent oxidation of D-glucose to D-gluconate via gluconolactone. Displays broad substrate specificity since it is able to catalyze the oxidation of a number of alternative aldose sugars, such as D-galactose, D-xylose and L-arabinose, to the corresponding glyconate. Can utilize both NAD(+) and NADP(+) as electron acceptor. Physiologically, seems to be involved in the degradation of both glucose and galactose through a non-phosphorylative variant of the Entner-Doudoroff pathway. The chain is Glucose 1-dehydrogenase from Saccharolobus solfataricus (Sulfolobus solfataricus).